The following is a 64-amino-acid chain: Toxin BmKIT3 (64 aa).

Residues 1-61 (DGYIRGSNGC…TWKSESNTCG (61 aa)) form the LCN-type CS-alpha/beta domain. 4 cysteine pairs are disulfide-bonded: cysteine 10-cysteine 60, cysteine 14-cysteine 35, cysteine 21-cysteine 42, and cysteine 25-cysteine 44. A Cysteine amide modification is found at cysteine 60.

The protein belongs to the long (4 C-C) scorpion toxin superfamily. Sodium channel inhibitor family. Beta subfamily. As to expression, expressed by the venom gland.

It is found in the secreted. Its function is as follows. Depressant insect beta-toxins cause a transient contraction paralysis followed by a slow flaccid paralysis. They bind voltage-independently at site-4 of sodium channels (Nav) and shift the voltage of activation toward more negative potentials thereby affecting sodium channel activation and promoting spontaneous and repetitive firing. The polypeptide is Toxin BmKIT3 (Olivierus martensii (Manchurian scorpion)).